The primary structure comprises 194 residues: Alkyl hydroperoxide reductase AhpD (194 aa).

The active-site Proton donor is cysteine 132. Residues cysteine 132 and cysteine 135 are joined by a disulfide bond. Cysteine 135 acts as the Cysteine sulfenic acid (-SOH) intermediate in catalysis.

It belongs to the AhpD family.

It catalyses the reaction N(6)-[(R)-dihydrolipoyl]-L-lysyl-[lipoyl-carrier protein] + a hydroperoxide = N(6)-[(R)-lipoyl]-L-lysyl-[lipoyl-carrier protein] + an alcohol + H2O. Functionally, antioxidant protein with alkyl hydroperoxidase activity. Required for the reduction of the AhpC active site cysteine residues and for the regeneration of the AhpC enzyme activity. The protein is Alkyl hydroperoxide reductase AhpD of Koribacter versatilis (strain Ellin345).